We begin with the raw amino-acid sequence, 264 residues long: Shikimate dehydrogenase (NADP(+)) (264 aa).

Shikimate-binding positions include 14–16 and Thr-59; that span reads SLS. The Proton acceptor role is filled by Lys-63. Residue Glu-75 participates in NADP(+) binding. Shikimate-binding residues include Asn-84 and Asp-99. NADP(+)-binding positions include 122–126, 144–149, and Ile-205; these read GAGGA and NRTPSK. Tyr-207 is a binding site for shikimate. Gly-228 lines the NADP(+) pocket.

This sequence belongs to the shikimate dehydrogenase family. In terms of assembly, homodimer.

It catalyses the reaction shikimate + NADP(+) = 3-dehydroshikimate + NADPH + H(+). The protein operates within metabolic intermediate biosynthesis; chorismate biosynthesis; chorismate from D-erythrose 4-phosphate and phosphoenolpyruvate: step 4/7. Involved in the biosynthesis of the chorismate, which leads to the biosynthesis of aromatic amino acids. Catalyzes the reversible NADPH linked reduction of 3-dehydroshikimate (DHSA) to yield shikimate (SA). This Pyrococcus abyssi (strain GE5 / Orsay) protein is Shikimate dehydrogenase (NADP(+)).